Consider the following 1225-residue polypeptide: RNA-directed RNA polymerase VP2 (1225 aa).

Residues 497–727 enclose the RdRp catalytic domain; the sequence is LFLSFMPYTI…NSIVLLQQLV (231 aa).

The protein belongs to the reoviridae RNA-directed RNA polymerase family. As to quaternary structure, interacts with VP6.

The catalysed reaction is RNA(n) + a ribonucleoside 5'-triphosphate = RNA(n+1) + diphosphate. In terms of biological role, RNA-directed RNA polymerase that is involved in transcription and genome replication. Following infection, it catalyzes the synthesis of fully conservative plus strands. After core assembly, which consists in recruitment of one capped plus-strand for each genomic segments and polymerase complexes, the polymerase switches mode and catalyzes the synthesis of complementary minus-strands. This Lymantria dispar (Gypsy moth) protein is RNA-directed RNA polymerase VP2 (S2).